Consider the following 1091-residue polypeptide: Voltage-dependent calcium channel subunit alpha-2/delta-3 (1091 aa).

An N-terminal signal peptide occupies residues 1 to 33 (MAGPGSLCCASRGASALLATALLYAALGDVVRS). Over 34 to 1068 (EQQIPLSVVK…HPEENARECG (1035 aa)) the chain is Extracellular. Asn166 is a glycosylation site (N-linked (GlcNAc...) asparagine). A VWFA domain is found at 256 to 438 (DVVILVDVSG…ENVMEYLHVL (183 aa)). A divalent metal cation-binding residues include Asp262, Ser264, and Ser266. An MIDAS-like motif motif is present at residues 262 to 266 (DVSGS). An N-linked (GlcNAc...) asparagine glycan is attached at Asn309. Cysteines 412 and 1055 form a disulfide. The region spanning 452–549 (WTEAYIDSTL…RPLYEEGKKR (98 aa)) is the Cache domain. 2 N-linked (GlcNAc...) asparagine glycosylation sites follow: Asn553 and Asn632. Phosphotyrosine is present on Tyr924. The chain crosses the membrane as a helical span at residues 1069-1089 (GASSLQAQAALLLLPLVSSLF). Over 1090 to 1091 (SR) the chain is Cytoplasmic.

The protein belongs to the calcium channel subunit alpha-2/delta family. Dimer formed of alpha-2-2 and delta-2 chains; disulfide-linked. Voltage-dependent calcium channels are multisubunit complexes, consisting of alpha-1 (CACNA1), alpha-2 (CACNA2D), beta (CACNB) and delta (CACNA2D) subunits in a 1:1:1:1 ratio. N-glycosylated. Post-translationally, may be proteolytically processed into subunits alpha-2-3 and delta-3 that are disulfide-linked. It is however unclear whether such cleavage really takes place in vivo and has a functional role. Brain-specific. Predominantly expressed in the caudate putamen, entorhinal complex, hippocampus and cortex.

The protein localises to the membrane. In terms of biological role, the alpha-2/delta subunit of voltage-dependent calcium channels regulates calcium current density and activation/inactivation kinetics of the calcium channel. Acts as a regulatory subunit for P/Q-type calcium channel (CACNA1A), N-type (CACNA1B), L-type (CACNA1C OR CACNA1D) but not T-type (CACNA1G). The polypeptide is Voltage-dependent calcium channel subunit alpha-2/delta-3 (Cacna2d3) (Mus musculus (Mouse)).